A 308-amino-acid chain; its full sequence is Acetyl-coenzyme A carboxylase carboxyl transferase subunit beta 1 (308 aa).

In terms of domain architecture, CoA carboxyltransferase N-terminal spans 25–294 (VWTKCTSCEQ…PMVVSVNESP (270 aa)). 4 residues coordinate Zn(2+): Cys-29, Cys-32, Cys-48, and Cys-51. Residues 29–51 (CTSCEQVLYHAELERNLEVCPKC) form a C4-type zinc finger. The tract at residues 289–308 (SVNESPNEEPYSVPEADEKG) is disordered.

Belongs to the AccD/PCCB family. In terms of assembly, acetyl-CoA carboxylase is a heterohexamer composed of biotin carboxyl carrier protein (AccB), biotin carboxylase (AccC) and two subunits each of ACCase subunit alpha (AccA) and ACCase subunit beta (AccD). Zn(2+) is required as a cofactor.

Its subcellular location is the cytoplasm. The catalysed reaction is N(6)-carboxybiotinyl-L-lysyl-[protein] + acetyl-CoA = N(6)-biotinyl-L-lysyl-[protein] + malonyl-CoA. It functions in the pathway lipid metabolism; malonyl-CoA biosynthesis; malonyl-CoA from acetyl-CoA: step 1/1. Its function is as follows. Component of the acetyl coenzyme A carboxylase (ACC) complex. Biotin carboxylase (BC) catalyzes the carboxylation of biotin on its carrier protein (BCCP) and then the CO(2) group is transferred by the transcarboxylase to acetyl-CoA to form malonyl-CoA. The sequence is that of Acetyl-coenzyme A carboxylase carboxyl transferase subunit beta 1 from Vibrio campbellii (strain ATCC BAA-1116).